Reading from the N-terminus, the 702-residue chain is Phosphate acetyltransferase (702 aa).

Positions 375 to 702 are phosphate acetyltransferase; sequence AFRYELIQRA…QATQSAADCG (328 aa).

In the N-terminal section; belongs to the CobB/CobQ family. The protein in the C-terminal section; belongs to the phosphate acetyltransferase and butyryltransferase family. In terms of assembly, homohexamer.

It localises to the cytoplasm. The enzyme catalyses acetyl-CoA + phosphate = acetyl phosphate + CoA. It functions in the pathway metabolic intermediate biosynthesis; acetyl-CoA biosynthesis; acetyl-CoA from acetate: step 2/2. Involved in acetate metabolism. This chain is Phosphate acetyltransferase (pta), found in Deinococcus radiodurans (strain ATCC 13939 / DSM 20539 / JCM 16871 / CCUG 27074 / LMG 4051 / NBRC 15346 / NCIMB 9279 / VKM B-1422 / R1).